The chain runs to 181 residues: GTP cyclohydrolase 1 2 (181 aa).

Belongs to the GTP cyclohydrolase I family. In terms of assembly, homomer.

The catalysed reaction is GTP + H2O = 7,8-dihydroneopterin 3'-triphosphate + formate + H(+). Its pathway is cofactor biosynthesis; 7,8-dihydroneopterin triphosphate biosynthesis; 7,8-dihydroneopterin triphosphate from GTP: step 1/1. The chain is GTP cyclohydrolase 1 2 from Pseudomonas syringae pv. tomato (strain ATCC BAA-871 / DC3000).